The following is a 326-amino-acid chain: Polycomb complex protein BMI-1 (326 aa).

The RING-type zinc finger occupies 18–57; the sequence is CVLCGGYFIDATTIIECLHSFCKTCIVRYLETSKYCPICD. Positions 81–95 match the Nuclear localization signal motif; that stretch reads KLVPGLFKNEMKRRR. The interaction with PHC2 stretch occupies residues 162 to 182; that stretch reads RYLRCPAAMTVMHLRKFLRSK. The interval 164 to 228 is interaction with E4F1; it reads LRCPAAMTVM…GPLPLKYRVR (65 aa). A disordered region spans residues 236 to 326; sequence ISHQRDGLTN…VNGSSATSSG (91 aa). Low complexity-rich tracts occupy residues 266-278, 290-303, and 315-326; these read PSTS…PSTP, SSTM…PSGN, and SSVNGSSATSSG.

As to quaternary structure, component of a PRC1-like complex. Identified in a PRC1-like HPRC-H complex with CBX2, CBX4, CBX8, PHC1, PHC2, PHC3 RING1 and RNF2. Interacts with RNF2/RING2. Interacts with RING1. Part of a complex that contains RNF2, UB2D3 and BMI1, where RNF2 and BMI1 form a tight heterodimer, and UB2D3 interacts only with RNF2. The complex composed of RNF2, UB2D3 and BMI1 binds nucleosomes, and has activity only with nucleosomal histone H2A. Interacts with CBX7 and CBX8. Interacts with SPOP. Part of a complex consisting of BMI1, CUL3 and SPOP. Interacts with E4F1. Interacts with PHC2. Interacts with zinc finger protein ZNF277. May be part of a complex including at least ZNF277, BMI1 and RNF2/RING2. Post-translationally, may be polyubiquitinated; which does not lead to proteasomal degradation. Monoubiquitinated.

It localises to the nucleus. The protein localises to the cytoplasm. Functionally, component of a Polycomb group (PcG) multiprotein PRC1-like complex, a complex class required to maintain the transcriptionally repressive state of many genes, including Hox genes, throughout development. PcG PRC1 complex acts via chromatin remodeling and modification of histones; it mediates monoubiquitination of histone H2A 'Lys-119', rendering chromatin heritably changed in its expressibility. The complex composed of RNF2, UB2D3 and BMI1 binds nucleosomes, and has activity only with nucleosomal histone H2A. In the PRC1-like complex, regulates the E3 ubiquitin-protein ligase activity of RNF2/RING2. This is Polycomb complex protein BMI-1 (BMI1) from Bos taurus (Bovine).